The primary structure comprises 519 residues: 2-isopropylmalate synthase (519 aa).

A Pyruvate carboxyltransferase domain is found at 12 to 274 (IRIFDTTLRD…DTSIHTSRIV (263 aa)). Residues aspartate 21, histidine 209, histidine 211, and asparagine 245 each contribute to the Mn(2+) site. The tract at residues 396-519 (RLASMTISDV…MQNKQNTALA (124 aa)) is regulatory domain.

It belongs to the alpha-IPM synthase/homocitrate synthase family. LeuA type 1 subfamily. As to quaternary structure, homodimer. The cofactor is Mn(2+).

The protein localises to the cytoplasm. The enzyme catalyses 3-methyl-2-oxobutanoate + acetyl-CoA + H2O = (2S)-2-isopropylmalate + CoA + H(+). It participates in amino-acid biosynthesis; L-leucine biosynthesis; L-leucine from 3-methyl-2-oxobutanoate: step 1/4. Catalyzes the condensation of the acetyl group of acetyl-CoA with 3-methyl-2-oxobutanoate (2-ketoisovalerate) to form 3-carboxy-3-hydroxy-4-methylpentanoate (2-isopropylmalate). The protein is 2-isopropylmalate synthase of Xylella fastidiosa (strain M23).